A 365-amino-acid chain; its full sequence is Methylthioribose-1-phosphate isomerase (365 aa).

Substrate contacts are provided by residues 53 to 55, Arg-90, and Gln-201; that span reads RGA. Asp-242 functions as the Proton donor in the catalytic mechanism. Residue 252–253 participates in substrate binding; the sequence is NK.

This sequence belongs to the eIF-2B alpha/beta/delta subunits family. MtnA subfamily.

The enzyme catalyses 5-(methylsulfanyl)-alpha-D-ribose 1-phosphate = 5-(methylsulfanyl)-D-ribulose 1-phosphate. Its pathway is amino-acid biosynthesis; L-methionine biosynthesis via salvage pathway; L-methionine from S-methyl-5-thio-alpha-D-ribose 1-phosphate: step 1/6. Its function is as follows. Catalyzes the interconversion of methylthioribose-1-phosphate (MTR-1-P) into methylthioribulose-1-phosphate (MTRu-1-P). In Methylorubrum populi (strain ATCC BAA-705 / NCIMB 13946 / BJ001) (Methylobacterium populi), this protein is Methylthioribose-1-phosphate isomerase.